The following is a 651-amino-acid chain: Probable potassium transport system protein Kup (651 aa).

The next 12 helical transmembrane spans lie at 41 to 61, 82 to 102, 130 to 150, 163 to 183, 194 to 214, 235 to 255, 276 to 296, 309 to 329, 366 to 386, 395 to 415, 426 to 446, and 450 to 470; these read LVLG…IYAF, VVSL…VLFV, LILG…VITP, IVAP…LVTL, VAIV…ASGL, FLMI…LAMT, WLWI…AFIL, MMPS…TVIA, IYIP…VLGF, AYGI…YIVM, ALPI…ANII, and EGGW…WTWV.

Belongs to the HAK/KUP transporter (TC 2.A.72) family.

The protein localises to the cell inner membrane. The catalysed reaction is K(+)(in) + H(+)(in) = K(+)(out) + H(+)(out). Functionally, transport of potassium into the cell. Likely operates as a K(+):H(+) symporter. The protein is Probable potassium transport system protein Kup of Brucella anthropi (strain ATCC 49188 / DSM 6882 / CCUG 24695 / JCM 21032 / LMG 3331 / NBRC 15819 / NCTC 12168 / Alc 37) (Ochrobactrum anthropi).